Here is a 250-residue protein sequence, read N- to C-terminus: MPIRNIAVGTPQEATHPDTLKAGLAEFISTFIFVFAGSGSGIAYNKLTNDGAATPAGLISASIAHAFALFVAVSVGANISGGHVNPAVTFGAFVGGNITLLRGIVYIIAQLLGSIVASALLVFVTASSVPAFGLSEGVGVGPALVLEIVMTFGLVYTVYATAVDPKKGNIGIIAPIAIGFIVGANILVGGAFTGASMNPAVSFGPAVVSWSWSNHWVYWAGPLIGGGIAGLVYEVLFINSTHEQLPTTDY.

A run of 2 helical transmembrane segments spans residues 22 to 42 (AGLA…GSGI) and 56 to 76 (AGLI…VSVG). The NPA 1 motif lies at 85 to 87 (NPA). Transmembrane regions (helical) follow at residues 104–124 (IVYI…LVFV), 138–158 (VGVG…VYTV), and 170–190 (IGII…LVGG). The short motif at 198–200 (NPA) is the NPA 2 element. A helical membrane pass occupies residues 218–238 (YWAGPLIGGGIAGLVYEVLFI).

This sequence belongs to the MIP/aquaporin (TC 1.A.8) family. TIP (TC 1.A.8.10) subfamily.

The protein localises to the membrane. Aquaporins facilitate the transport of water and small neutral solutes across cell membranes. May have a role in buffering osmotic fluctations in the highly compartmented vacuole of arbuscule cells. This chain is Probable aquaporin TIP-type (AQP1), found in Medicago truncatula (Barrel medic).